A 489-amino-acid polypeptide reads, in one-letter code: Betaine aldehyde dehydrogenase (489 aa).

Residues Thr26 and Asp93 each contribute to the K(+) site. Position 150-152 (Gly150–Trp152) interacts with NAD(+). Residue Lys162 is the Charge relay system of the active site. Lys176–Glu179 contacts NAD(+). Val180 serves as a coordination point for K(+). Gly229–Thr232 is a binding site for NAD(+). Leu245 is a K(+) binding site. Glu251 functions as the Proton acceptor in the catalytic mechanism. NAD(+)-binding residues include Gly253, Cys285, and Glu386. Residue Cys285 is the Nucleophile of the active site. The residue at position 285 (Cys285) is a Cysteine sulfenic acid (-SOH). 2 residues coordinate K(+): Lys456 and Gly459. Glu463 acts as the Charge relay system in catalysis.

Belongs to the aldehyde dehydrogenase family. As to quaternary structure, dimer of dimers. Requires K(+) as cofactor.

The catalysed reaction is betaine aldehyde + NAD(+) + H2O = glycine betaine + NADH + 2 H(+). It participates in amine and polyamine biosynthesis; betaine biosynthesis via choline pathway; betaine from betaine aldehyde: step 1/1. Functionally, involved in the biosynthesis of the osmoprotectant glycine betaine. Catalyzes the irreversible oxidation of betaine aldehyde to the corresponding acid. The protein is Betaine aldehyde dehydrogenase of Burkholderia ambifaria (strain ATCC BAA-244 / DSM 16087 / CCUG 44356 / LMG 19182 / AMMD) (Burkholderia cepacia (strain AMMD)).